Reading from the N-terminus, the 327-residue chain is MQNLKFLIAAVSCLGPALAAPTPTSNFINSNFNKRASVEDSAFGYASLNGGTTGGAGGTTTTVSSYAEFTAAVQGDDPKIVIVSGPIEETAEQVDVGSNTSILGADSSAVLTGFGLRLKEVENVIIRNLGIAKVLADNGDAIGAEYSNNIWIDHVDVSSDRDHDKDYYDGLLDFKRGSDYITVSNSFIHDHWKASLVGHSNSNEDEDSGKLHVTYANNYWYNLNSRAPSIRFGTGHIYNNYYETVSDGINTRIGAQVLVEGNVFVDSKKALYSTDEGYAVERNNDFGDAKNEALEGTLTSVEYEYDLLDTSEVKSAVVGTAGQTLTF.

A signal peptide spans 1–19; it reads MQNLKFLIAAVSCLGPALA. A glycan (N-linked (GlcNAc...) asparagine) is linked at Asn99. 3 residues coordinate Ca(2+): Asp140, Asp169, and Asp173. Arg226 is a catalytic residue.

Belongs to the polysaccharide lyase 1 family. Requires Ca(2+) as cofactor.

The protein resides in the secreted. The catalysed reaction is Eliminative cleavage of (1-&gt;4)-alpha-D-galacturonan to give oligosaccharides with 4-deoxy-alpha-D-galact-4-enuronosyl groups at their non-reducing ends.. Its function is as follows. Pectinolytic enzyme consist of four classes of enzymes: pectin lyase, polygalacturonase, pectin methylesterase and rhamnogalacturonase. Among pectinolytic enzymes, pectin lyase is the most important in depolymerization of pectin, since it cleaves internal glycosidic bonds of highly methylated pectins. Favors pectate, the anion, over pectin, the methyl ester. This is Pectate lyase A (plyA) from Emericella nidulans (strain FGSC A4 / ATCC 38163 / CBS 112.46 / NRRL 194 / M139) (Aspergillus nidulans).